A 551-amino-acid chain; its full sequence is Frizzled-2 (551 aa).

Positions methionine 1–glycine 26 are cleaved as a signal peptide. The Extracellular segment spans residues glutamate 27–arginine 231. Residues proline 33–glutamine 152 enclose the FZ domain. Cystine bridges form between cysteine 38/cysteine 99, cysteine 46/cysteine 92, cysteine 83/cysteine 120, cysteine 109/cysteine 149, and cysteine 113/cysteine 137. Residue asparagine 52 is glycosylated (N-linked (GlcNAc...) asparagine). Asparagine 153 carries N-linked (GlcNAc...) asparagine glycosylation. The chain crosses the membrane as a helical span at residues isoleucine 232 to tyrosine 252. Topologically, residues leucine 253–proline 265 are cytoplasmic. The helical transmembrane segment at isoleucine 266–leucine 286 threads the bilayer. Residues glycine 287 to cysteine 313 are Extracellular-facing. A helical transmembrane segment spans residues threonine 314–leucine 334. At serine 335 to glutamine 356 the chain is on the cytoplasmic side. The helical transmembrane segment at tyrosine 357–glycine 377 threads the bilayer. Topologically, residues glutamine 378–glycine 400 are extracellular. Residues phenylalanine 401–phenylalanine 421 traverse the membrane as a helical segment. Over valine 422–arginine 447 the chain is Cytoplasmic. A helical transmembrane segment spans residues isoleucine 448–tyrosine 468. Residues glutamate 469–threonine 505 are Extracellular-facing. A helical transmembrane segment spans residues valine 506 to tryptophan 526. Residues serine 527 to tryptophan 534 are Cytoplasmic-facing. The Lys-Thr-X-X-X-Trp motif, mediates interaction with the PDZ domain of Dvl family members signature appears at lysine 529–tryptophan 534. Positions threonine 549 to valine 551 match the PDZ-binding motif.

Belongs to the G-protein coupled receptor Fz/Smo family. Widely expressed, especially in the eye anlage, otic vesicle and developing somites.

Its subcellular location is the membrane. It is found in the cell membrane. In terms of biological role, receptor for Wnt proteins. Most of frizzled receptors are coupled to the beta-catenin canonical signaling pathway, which leads to the activation of disheveled proteins, inhibition of GSK-3 kinase, nuclear accumulation of beta-catenin and activation of Wnt target genes. A second signaling pathway involving PKC and calcium fluxes has been seen for some family members, but it is not yet clear if it represents a distinct pathway or if it can be integrated in the canonical pathway, as PKC seems to be required for Wnt-mediated inactivation of GSK-3 kinase. Both pathways seem to involve interactions with G-proteins. May be involved in transduction and intercellular transmission of polarity information during tissue morphogenesis and/or in differentiated tissues. This Xenopus laevis (African clawed frog) protein is Frizzled-2 (fzd2).